Here is a 189-residue protein sequence, read N- to C-terminus: Xanthine phosphoribosyltransferase (189 aa).

Xanthine is bound by residues Leu-20 and Asn-27. 5-phospho-alpha-D-ribose 1-diphosphate is bound at residue 128–132 (ANGEA). A xanthine-binding site is contributed by Lys-156.

This sequence belongs to the purine/pyrimidine phosphoribosyltransferase family. Xpt subfamily. As to quaternary structure, homodimer.

It localises to the cytoplasm. The enzyme catalyses XMP + diphosphate = xanthine + 5-phospho-alpha-D-ribose 1-diphosphate. Its pathway is purine metabolism; XMP biosynthesis via salvage pathway; XMP from xanthine: step 1/1. Its function is as follows. Converts the preformed base xanthine, a product of nucleic acid breakdown, to xanthosine 5'-monophosphate (XMP), so it can be reused for RNA or DNA synthesis. The chain is Xanthine phosphoribosyltransferase from Lactobacillus delbrueckii subsp. bulgaricus (strain ATCC 11842 / DSM 20081 / BCRC 10696 / JCM 1002 / NBRC 13953 / NCIMB 11778 / NCTC 12712 / WDCM 00102 / Lb 14).